The chain runs to 424 residues: GTPase Obg (424 aa).

The Obg domain occupies Met1–Leu158. Positions Ala159–Ser331 constitute an OBG-type G domain. Residues Gly165–Ser172, Phe190–Lys194, Asp212–Gly215, Asn282–Asp285, and Ser312–Ala314 each bind GTP. Mg(2+)-binding residues include Ser172 and Thr192. The 80-residue stretch at Arg345 to Leu424 folds into the OCT domain.

The protein belongs to the TRAFAC class OBG-HflX-like GTPase superfamily. OBG GTPase family. As to quaternary structure, monomer. The cofactor is Mg(2+).

It localises to the cytoplasm. In terms of biological role, an essential GTPase which binds GTP, GDP and possibly (p)ppGpp with moderate affinity, with high nucleotide exchange rates and a fairly low GTP hydrolysis rate. Plays a role in control of the cell cycle, stress response, ribosome biogenesis and in those bacteria that undergo differentiation, in morphogenesis control. The sequence is that of GTPase Obg from Clostridium botulinum (strain Langeland / NCTC 10281 / Type F).